The chain runs to 868 residues: DNA mismatch repair protein MutS (868 aa).

623–630 (GPNMAGKS) lines the ATP pocket.

This sequence belongs to the DNA mismatch repair MutS family.

In terms of biological role, this protein is involved in the repair of mismatches in DNA. It is possible that it carries out the mismatch recognition step. This protein has a weak ATPase activity. This is DNA mismatch repair protein MutS from Magnetococcus marinus (strain ATCC BAA-1437 / JCM 17883 / MC-1).